We begin with the raw amino-acid sequence, 476 residues long: UDP-glycosyltransferase 71C3 (476 aa).

Residues Ser-290, 349 to 351 (APQ), 366 to 374 (HCGWNSVLE), and 388 to 391 (YAEQ) contribute to the UDP-alpha-D-glucose site.

The protein belongs to the UDP-glycosyltransferase family.

Its function is as follows. Possesses low quercetin 3-O-glucosyltransferase activity in vitro. The sequence is that of UDP-glycosyltransferase 71C3 (UGT71C3) from Arabidopsis thaliana (Mouse-ear cress).